The following is a 226-amino-acid chain: MIRILSLNLIGLACGIGLYYDFQNRKHFKEVIDNNIPINGNNIITGTITCENTDIDNIFVHDRLPIPYSMSEDPFSLFELHGKNKIKFYDCDNYYYNDGLRQKYFKIGTVKYFDLWYIEDNFYVEKSNIKINGINLIYDKNLKIFYPKHDYHYLNSNKYLVRKHIPNNSNVTAFGKINKYGMIKIESIGDSYNVIDYVAEKYFGISDIYTSTLSFGLIISLFYLLK.

The chain crosses the membrane as a helical span at residues 203-225; sequence FGISDIYTSTLSFGLIISLFYLL.

The protein resides in the membrane. This is an uncharacterized protein from Acanthamoeba polyphaga (Amoeba).